The following is a 98-amino-acid chain: YcgL domain-containing protein Ping_1076 (98 aa).

Residues 1 to 85 enclose the YcgL domain; it reads MLCAVYKSIR…PPVNHLQEHK (85 aa). The disordered stretch occupies residues 75-98; that stretch reads PPPVNHLQEHKDWKKKRQENKNEI.

The chain is YcgL domain-containing protein Ping_1076 from Psychromonas ingrahamii (strain DSM 17664 / CCUG 51855 / 37).